The chain runs to 308 residues: Phosphoribosylaminoimidazole-succinocarboxamide synthase (308 aa).

The protein belongs to the SAICAR synthetase family.

The enzyme catalyses 5-amino-1-(5-phospho-D-ribosyl)imidazole-4-carboxylate + L-aspartate + ATP = (2S)-2-[5-amino-1-(5-phospho-beta-D-ribosyl)imidazole-4-carboxamido]succinate + ADP + phosphate + 2 H(+). It participates in purine metabolism; IMP biosynthesis via de novo pathway; 5-amino-1-(5-phospho-D-ribosyl)imidazole-4-carboxamide from 5-amino-1-(5-phospho-D-ribosyl)imidazole-4-carboxylate: step 1/2. This is Phosphoribosylaminoimidazole-succinocarboxamide synthase from Xanthomonas euvesicatoria pv. vesicatoria (strain 85-10) (Xanthomonas campestris pv. vesicatoria).